The primary structure comprises 118 residues: Small ribosomal subunit protein uS13 (118 aa).

Positions 94–118 (SLPLRGQRTKTNARTRKGPRKPIRK) are disordered.

This sequence belongs to the universal ribosomal protein uS13 family. Part of the 30S ribosomal subunit. Forms a loose heterodimer with protein S19. Forms two bridges to the 50S subunit in the 70S ribosome.

Located at the top of the head of the 30S subunit, it contacts several helices of the 16S rRNA. In the 70S ribosome it contacts the 23S rRNA (bridge B1a) and protein L5 of the 50S subunit (bridge B1b), connecting the 2 subunits; these bridges are implicated in subunit movement. Contacts the tRNAs in the A and P-sites. In Shewanella woodyi (strain ATCC 51908 / MS32), this protein is Small ribosomal subunit protein uS13.